We begin with the raw amino-acid sequence, 419 residues long: Probable glycosidase C21B10.07 (419 aa).

2 disordered regions span residues 1–20 and 29–67; these read MGIP…AALS and DPAR…NNEN. Residues 30-59 are compositionally biased toward basic and acidic residues; the sequence is PARKNESTNDVIDNHTDTEIDDHDNDHENL. A helical membrane pass occupies residues 88–108; sequence FIWILIFIVALICSVLIGVLG. The region spanning 122-387 is the GH16 domain; sequence PSYKAKTYSL…WAGSSVYSSA (266 aa). Glu-237 acts as the Nucleophile in catalysis. The active-site Proton donor is the Glu-242.

It belongs to the glycosyl hydrolase 16 family.

The protein localises to the membrane. The protein is Probable glycosidase C21B10.07 of Schizosaccharomyces pombe (strain 972 / ATCC 24843) (Fission yeast).